The sequence spans 201 residues: MPQAVAGPEIERLIQLLGRMPGLGPRSARRAALQLIKKRETLLAPLADAMRIAADRIVVCHACGNVDTSDPCTICRDETRDPTTLVVVEDVSDLWALERSGAVKARYHVLGGVLSALDGVRPEHLTIALLVERASAPGVKEIILALNATVDGQTTAHYVTESLKPLGLTITRLAHGVPVGGELDYLDEGTLTAAIRSRTAF.

A C4-type zinc finger spans residues 60 to 75 (CHACGNVDTSDPCTIC). One can recognise a Toprim domain in the interval 83–178 (TTLVVVEDVS…TITRLAHGVP (96 aa)).

This sequence belongs to the RecR family.

Functionally, may play a role in DNA repair. It seems to be involved in an RecBC-independent recombinational process of DNA repair. It may act with RecF and RecO. The polypeptide is Recombination protein RecR (Methylorubrum populi (strain ATCC BAA-705 / NCIMB 13946 / BJ001) (Methylobacterium populi)).